The chain runs to 510 residues: ATP synthase subunit alpha (510 aa).

Position 169 to 176 (169 to 176) interacts with ATP; sequence GDRQTGKT.

Belongs to the ATPase alpha/beta chains family. As to quaternary structure, F-type ATPases have 2 components, CF(1) - the catalytic core - and CF(0) - the membrane proton channel. CF(1) has five subunits: alpha(3), beta(3), gamma(1), delta(1), epsilon(1). CF(0) has three main subunits: a(1), b(2) and c(9-12). The alpha and beta chains form an alternating ring which encloses part of the gamma chain. CF(1) is attached to CF(0) by a central stalk formed by the gamma and epsilon chains, while a peripheral stalk is formed by the delta and b chains.

Its subcellular location is the cell inner membrane. The enzyme catalyses ATP + H2O + 4 H(+)(in) = ADP + phosphate + 5 H(+)(out). In terms of biological role, produces ATP from ADP in the presence of a proton gradient across the membrane. The alpha chain is a regulatory subunit. The polypeptide is ATP synthase subunit alpha (Anaeromyxobacter sp. (strain K)).